The following is a 290-amino-acid chain: Glucuronoxylan 4-O-methyltransferase 2 (290 aa).

Residues 8–28 (FISSKLIFICCSILVLFILFL) form a helical membrane-spanning segment.

Belongs to the methyltransferase superfamily. As to expression, expressed in roots, rosette leaves and stems.

It is found in the golgi apparatus membrane. The enzyme catalyses glucuronoxylan D-glucuronate + n S-adenosyl-L-methionine = glucuronoxylan 4-O-methyl-D-glucuronate + n S-adenosyl-L-homocysteine + n H(+). Its function is as follows. Methyltransferase catalyzing 4-O-methylation of glucuronic acid side chains on xylan. The sequence is that of Glucuronoxylan 4-O-methyltransferase 2 (GXM2) from Arabidopsis thaliana (Mouse-ear cress).